Reading from the N-terminus, the 201-residue chain is Prostamide/prostaglandin F synthase (201 aa).

It belongs to the peroxiredoxin-like PRXL2 family. Prostamide/prostaglandin F synthase subfamily.

The protein localises to the cytoplasm. Its subcellular location is the cytosol. It carries out the reaction prostaglandin H2 + [thioredoxin]-dithiol = prostaglandin F2alpha + [thioredoxin]-disulfide. The catalysed reaction is prostamide F2alpha + [thioredoxin]-disulfide = prostamide H2 + [thioredoxin]-dithiol. Catalyzes the reduction of prostaglandin-ethanolamide H(2) (prostamide H(2)) to prostamide F(2alpha) with NADPH as proton donor. Also able to reduce prostaglandin H(2) to prostaglandin F(2alpha). The protein is Prostamide/prostaglandin F synthase (prxl2b) of Danio rerio (Zebrafish).